Here is a 316-residue protein sequence, read N- to C-terminus: Ribosomal RNA small subunit methyltransferase H (316 aa).

Residues 35 to 37, aspartate 55, phenylalanine 84, aspartate 105, and glutamine 112 each bind S-adenosyl-L-methionine; that span reads AGH.

Belongs to the methyltransferase superfamily. RsmH family.

Its subcellular location is the cytoplasm. It catalyses the reaction cytidine(1402) in 16S rRNA + S-adenosyl-L-methionine = N(4)-methylcytidine(1402) in 16S rRNA + S-adenosyl-L-homocysteine + H(+). Specifically methylates the N4 position of cytidine in position 1402 (C1402) of 16S rRNA. This is Ribosomal RNA small subunit methyltransferase H from Streptococcus pneumoniae (strain JJA).